The primary structure comprises 338 residues: Probable G-protein coupled receptor 160 (338 aa).

Residues 1 to 23 (MTALSSENCSFQYQLRQTNQPLD) are Extracellular-facing. Asn8 carries N-linked (GlcNAc...) asparagine glycosylation. The chain crosses the membrane as a helical span at residues 24-44 (VNYLLFLIILGKILLNILTLG). At 45 to 58 (MRRKNTCQNFMEYF) the chain is on the cytoplasmic side. The chain crosses the membrane as a helical span at residues 59-79 (CISLAFVDLLLLVNISIILYF). At 80 to 93 (RDFVLLSIRFTKYH) the chain is on the extracellular side. Residues 94–114 (ICLFTQIISFTYGFLHYPVFL) traverse the membrane as a helical segment. The Cytoplasmic segment spans residues 115–136 (TACIDYCLNFSKTTKLSFKCQK). The helical transmembrane segment at 137–157 (LFYFFTVILIWISVLAYVLGD) threads the bilayer. Residues 158 to 177 (PAIYQSLKAQNAYSRHCPFY) are Extracellular-facing. The chain crosses the membrane as a helical span at residues 178–198 (VSIQSYWLSFFMVMILFVAFI). The Cytoplasmic segment spans residues 199 to 244 (TCWEEVTTLVQAIRITSYMNETILYFPFSSHSSYTVRSKKIFLSKL). A helical membrane pass occupies residues 245–265 (IVCFLSTWLPFVLLQVIIVLL). Over 266-268 (KVQ) the chain is Extracellular. A helical membrane pass occupies residues 269–289 (IPAYIEMNIPWLYFVNSFLIA). The Cytoplasmic portion of the chain corresponds to 290–338 (TVYWFNCHKLNLKDIGLPLDPFVNWKCCFIPLTIPNLEQIEKPISIMIC).

The protein belongs to the G-protein coupled receptor 1 family.

It localises to the cell membrane. In terms of biological role, orphan receptor. The sequence is that of Probable G-protein coupled receptor 160 (GPR160) from Homo sapiens (Human).